A 334-amino-acid polypeptide reads, in one-letter code: Nucleoid-associated protein YPK_2796 (334 aa).

This sequence belongs to the YejK family.

The protein resides in the cytoplasm. It localises to the nucleoid. This is Nucleoid-associated protein YPK_2796 from Yersinia pseudotuberculosis serotype O:3 (strain YPIII).